Consider the following 275-residue polypeptide: 3-methyl-2-oxobutanoate hydroxymethyltransferase (275 aa).

Residues D49 and D88 each coordinate Mg(2+). Residues 49-50 (DS), D88, and K118 contribute to the 3-methyl-2-oxobutanoate site. E120 lines the Mg(2+) pocket. The active-site Proton acceptor is the E187.

It belongs to the PanB family. As to quaternary structure, homodecamer; pentamer of dimers. Mg(2+) serves as cofactor.

Its subcellular location is the cytoplasm. The enzyme catalyses 3-methyl-2-oxobutanoate + (6R)-5,10-methylene-5,6,7,8-tetrahydrofolate + H2O = 2-dehydropantoate + (6S)-5,6,7,8-tetrahydrofolate. It functions in the pathway cofactor biosynthesis; (R)-pantothenate biosynthesis; (R)-pantoate from 3-methyl-2-oxobutanoate: step 1/2. In terms of biological role, catalyzes the reversible reaction in which hydroxymethyl group from 5,10-methylenetetrahydrofolate is transferred onto alpha-ketoisovalerate to form ketopantoate. The protein is 3-methyl-2-oxobutanoate hydroxymethyltransferase of Bartonella henselae (strain ATCC 49882 / DSM 28221 / CCUG 30454 / Houston 1) (Rochalimaea henselae).